The chain runs to 305 residues: Methionyl-tRNA formyltransferase (305 aa).

Residue 110-113 (SLLP) coordinates (6S)-5,6,7,8-tetrahydrofolate.

The protein belongs to the Fmt family.

It catalyses the reaction L-methionyl-tRNA(fMet) + (6R)-10-formyltetrahydrofolate = N-formyl-L-methionyl-tRNA(fMet) + (6S)-5,6,7,8-tetrahydrofolate + H(+). Its function is as follows. Attaches a formyl group to the free amino group of methionyl-tRNA(fMet). The formyl group appears to play a dual role in the initiator identity of N-formylmethionyl-tRNA by promoting its recognition by IF2 and preventing the misappropriation of this tRNA by the elongation apparatus. The chain is Methionyl-tRNA formyltransferase from Gluconacetobacter diazotrophicus (strain ATCC 49037 / DSM 5601 / CCUG 37298 / CIP 103539 / LMG 7603 / PAl5).